Reading from the N-terminus, the 313-residue chain is Protein FixB (313 aa).

An FAD-binding site is contributed by L255–D283.

The protein belongs to the ETF alpha-subunit/FixB family. In terms of assembly, heterodimer of FixA and FixB.

The protein operates within amine and polyamine metabolism; carnitine metabolism. Its function is as follows. Required for anaerobic carnitine reduction. May bring reductant to CaiA. The protein is Protein FixB of Escherichia coli (strain SMS-3-5 / SECEC).